Reading from the N-terminus, the 434-residue chain is Serine hydroxymethyltransferase (434 aa).

(6S)-5,6,7,8-tetrahydrofolate-binding positions include Leu133 and Gly137–Leu139. An N6-(pyridoxal phosphate)lysine modification is found at Lys242.

The protein belongs to the SHMT family. In terms of assembly, homodimer. Pyridoxal 5'-phosphate is required as a cofactor.

It is found in the cytoplasm. It carries out the reaction (6R)-5,10-methylene-5,6,7,8-tetrahydrofolate + glycine + H2O = (6S)-5,6,7,8-tetrahydrofolate + L-serine. Its pathway is one-carbon metabolism; tetrahydrofolate interconversion. It participates in amino-acid biosynthesis; glycine biosynthesis; glycine from L-serine: step 1/1. Its function is as follows. Catalyzes the reversible interconversion of serine and glycine with tetrahydrofolate (THF) serving as the one-carbon carrier. This reaction serves as the major source of one-carbon groups required for the biosynthesis of purines, thymidylate, methionine, and other important biomolecules. Also exhibits THF-independent aldolase activity toward beta-hydroxyamino acids, producing glycine and aldehydes, via a retro-aldol mechanism. This Methylorubrum populi (strain ATCC BAA-705 / NCIMB 13946 / BJ001) (Methylobacterium populi) protein is Serine hydroxymethyltransferase.